A 65-amino-acid polypeptide reads, in one-letter code: UPF0434 protein PSHAa1659 (65 aa).

It belongs to the UPF0434 family.

The polypeptide is UPF0434 protein PSHAa1659 (Pseudoalteromonas translucida (strain TAC 125)).